We begin with the raw amino-acid sequence, 403 residues long: Dual-specificity RNA methyltransferase RlmN (403 aa).

The Proton acceptor role is filled by Glu-126. Positions Glu-132–Leu-375 constitute a Radical SAM core domain. A disulfide bond links Cys-139 and Cys-378. Residues Cys-146, Cys-150, and Cys-153 each coordinate [4Fe-4S] cluster. Residues Gly-204 to Glu-205, Ser-236, Ser-258 to His-260, and Asn-335 contribute to the S-adenosyl-L-methionine site. Residue Cys-378 is the S-methylcysteine intermediate of the active site.

This sequence belongs to the radical SAM superfamily. RlmN family. It depends on [4Fe-4S] cluster as a cofactor.

It is found in the cytoplasm. It catalyses the reaction adenosine(2503) in 23S rRNA + 2 reduced [2Fe-2S]-[ferredoxin] + 2 S-adenosyl-L-methionine = 2-methyladenosine(2503) in 23S rRNA + 5'-deoxyadenosine + L-methionine + 2 oxidized [2Fe-2S]-[ferredoxin] + S-adenosyl-L-homocysteine. It carries out the reaction adenosine(37) in tRNA + 2 reduced [2Fe-2S]-[ferredoxin] + 2 S-adenosyl-L-methionine = 2-methyladenosine(37) in tRNA + 5'-deoxyadenosine + L-methionine + 2 oxidized [2Fe-2S]-[ferredoxin] + S-adenosyl-L-homocysteine. In terms of biological role, specifically methylates position 2 of adenine 2503 in 23S rRNA and position 2 of adenine 37 in tRNAs. m2A2503 modification seems to play a crucial role in the proofreading step occurring at the peptidyl transferase center and thus would serve to optimize ribosomal fidelity. This is Dual-specificity RNA methyltransferase RlmN from Bradyrhizobium sp. (strain ORS 278).